Here is a 445-residue protein sequence, read N- to C-terminus: Histone acetyltransferase ESA1 (445 aa).

S17 carries the phosphoserine modification. Residues 22–74 (IIKCQCWVQKNDEERLAEILSINTRKAPPKFYVHYVNYNKRLDEWITTDRINL) enclose the Tudor-knot domain. The tract at residues 88–114 (EDNKKQKKKKATNTSETPQDSLQDGVD) is disordered. Positions 99-109 (TNTSETPQDSL) are enriched in polar residues. The MYST-type HAT domain occupies 162–433 (ARVRNLNRII…IDPNRLIWKP (272 aa)). A C2HC MYST-type; degenerate zinc finger spans residues 195-220 (IYIDDFTLQYFGSKKQYERYRKKCTL). Positions 245-266 (RTWCRNLCLLSKLFLDHKTLYY) match the ESA1-RPD3 motif motif. An N6-acetyllysine; by autocatalysis modification is found at K262. Acetyl-CoA is bound by residues 303–307 (ACILT) and 312–318 (QRMGYGK). The Proton donor/acceptor role is filled by E338. Position 342 (S342) interacts with acetyl-CoA.

It belongs to the MYST (SAS/MOZ) family. In terms of assembly, component of the NuA4 histone acetyltransferase complex composed of at least ACT1, ARP4, EAF3, EAF5, EAF6, EAF7, EPL1, ESA1, SWC4, TRA1, VID21, YAF9 and YNG2. The complex interacts with histones H4 (HHF1 and HHF2), H3 (HHT1 and HHT2) and H2A (HTA1 and HTA2). Autoacetylation at Lys-262 is required for proper function.

It catalyses the reaction L-lysyl-[histone] + acetyl-CoA = N(6)-acetyl-L-lysyl-[histone] + CoA + H(+). It carries out the reaction L-lysyl-[protein] + acetyl-CoA = N(6)-acetyl-L-lysyl-[protein] + CoA + H(+). The enzyme catalyses 2-hydroxyisobutanoyl-CoA + L-lysyl-[protein] = N(6)-(2-hydroxyisobutanoyl)-L-lysyl-[protein] + CoA + H(+). The catalysed reaction is (2E)-butenoyl-CoA + L-lysyl-[protein] = N(6)-(2E)-butenoyl-L-lysyl-[protein] + CoA + H(+). Functionally, catalytic component of the NuA4 histone acetyltransferase (HAT), a multiprotein complex involved in epigenetic transcriptional activation of selected genes principally by acetylation of nucleosomal histones H4, H3, H2B, H2A and H2A variant H2A.Z. Acetylates histone H4 to form H4K5ac, H4K8ac, H4K12ac and H4K16ac, histone H3 to form H3K14ac, histone H2B to form H2BK16ac, histone H2A to form H2AK4ac and H2AK7ac, and histone variant H2A.Z to form H2A.ZK14ac. Acetylation of histones gives a specific tag for epigenetic transcription initiation and elongation. Acetylation of histone H4 is essential for DNA double-strand break repair through homologous recombination. Involved in cell cycle progression. Recruitment to promoters depends on H3K4me. Also acetylates non-histone proteins, such as ATG3 and PAH1. Regulates autophagy by acetylating ATG3, controlling interaction the interaction between ATG3 and ATG8 and ATG8 lipidation. Acts as a regulator of fatty-acid-induced triacylglycerol synthesis by catalyzing acetylation of PAH1, thereby promoting the synthesis of diacylglycerol. In addition to protein acetyltransferase, can use different acyl-CoA substrates, such as 2-hydroxyisobutanoyl-CoA (2-hydroxyisobutyryl-CoA) or (2E)-butenoyl-CoA (crotonyl-CoA), and is able to mediate protein 2-hydroxyisobutyrylation and crotonylation, respectively. Catalyzes histone crotonylation. The sequence is that of Histone acetyltransferase ESA1 from Saccharomyces cerevisiae (strain ATCC 204508 / S288c) (Baker's yeast).